The primary structure comprises 89 residues: Teretoxin Tan22.12 (89 aa).

A signal peptide spans 1-22 (MKVLFTLAMIVVTLCLGQRMRR).

It belongs to the teretoxin C (TC) superfamily. In terms of processing, contains 4 disulfide bonds. As to expression, expressed by the venom duct.

The protein localises to the secreted. This is Teretoxin Tan22.12 from Terebra anilis (Auger snail).